The following is a 698-amino-acid chain: Long-chain-fatty-acid--CoA ligase 1 (698 aa).

M1 is subject to N-acetylmethionine. Y9 bears the 3'-nitrotyrosine mark. Residues 25–45 (LPTNTLMGFGAFAALTTFWYA) form a helical; Signal-anchor for type III membrane protein membrane-spanning segment. The Cytoplasmic segment spans residues 46 to 698 (TRPKPLKPPC…IDDLYSTIKV (653 aa)). Y84 is modified (phosphotyrosine). S135 carries an O-linked (GlcNAc) serine glycan. Residues K207, K356, and K386 each carry the N6-acetyllysine modification. S620 is subject to Phosphoserine. K632 is modified (N6-acetyllysine).

It belongs to the ATP-dependent AMP-binding enzyme family. It depends on Mg(2+) as a cofactor. As to expression, highly expressed in liver, heart, skeletal muscle, kidney and erythroid cells, and to a lesser extent in brain, lung, placenta and pancreas.

It localises to the mitochondrion outer membrane. It is found in the peroxisome membrane. The protein resides in the microsome membrane. Its subcellular location is the endoplasmic reticulum membrane. The enzyme catalyses a long-chain fatty acid + ATP + CoA = a long-chain fatty acyl-CoA + AMP + diphosphate. The catalysed reaction is (5Z,8Z,11Z,14Z)-eicosatetraenoate + ATP + CoA = (5Z,8Z,11Z,14Z)-eicosatetraenoyl-CoA + AMP + diphosphate. It carries out the reaction 3,7,11,15-tetramethylhexadecanoate + ATP + CoA = phytanoyl-CoA + AMP + diphosphate. It catalyses the reaction hexadecanoate + ATP + CoA = hexadecanoyl-CoA + AMP + diphosphate. The enzyme catalyses (E)-hexadec-2-enoate + ATP + CoA = (2E)-hexadecenoyl-CoA + AMP + diphosphate. The catalysed reaction is 2,6,10,14-tetramethylpentadecanoate + ATP + CoA = pristanoyl-CoA + AMP + diphosphate. It carries out the reaction 14,15-epoxy-(5Z,8Z,11Z)-eicosatrienoate + ATP + CoA = 14,15-epoxy-(5Z,8Z,11Z)-eicosatrienoyl-CoA + AMP + diphosphate. It catalyses the reaction 5-hydroxy-(6E,8Z,11Z,14Z)-eicosatetraenoate + ATP + CoA = 5-hydroxy-(6E,8Z,11Z,14Z)-eicosatetraenoyl-CoA + AMP + diphosphate. The enzyme catalyses 12-hydroxy-(5Z,8Z,10E,14Z)-eicosatetraenoate + ATP + CoA = 12-hydroxy-(5Z,8Z,10E,14Z)-eicosatetraenoyl-CoA + AMP + diphosphate. The catalysed reaction is 15-hydroxy-(5Z,8Z,11Z,13E)-eicosatetraenoate + ATP + CoA = 15-hydroxy-(5Z,8Z,11Z,13E)-eicosatetraenoyl-CoA + AMP + diphosphate. It carries out the reaction (9Z)-octadecenoate + ATP + CoA = (9Z)-octadecenoyl-CoA + AMP + diphosphate. Its activity is regulated as follows. Inhibited at high temperature and by arachidonate. In terms of biological role, catalyzes the conversion of long-chain fatty acids to their active form acyl-CoAs for both synthesis of cellular lipids, and degradation via beta-oxidation. Preferentially uses palmitoleate, oleate and linoleate. Preferentially activates arachidonate than epoxyeicosatrienoic acids (EETs) or hydroxyeicosatrienoic acids (HETEs). This chain is Long-chain-fatty-acid--CoA ligase 1, found in Homo sapiens (Human).